Consider the following 333-residue polypeptide: Ketol-acid reductoisomerase (NAD(P)(+)) (333 aa).

One can recognise a KARI N-terminal Rossmann domain in the interval 2–182 (AKIYYDEDAS…GATRAGVIET (181 aa)). NADP(+) is bound by residues 25–28 (YGSQ), Ser-51, and 83–86 (DTVQ). His-108 is an active-site residue. Position 134 (Gly-134) interacts with NADP(+). In terms of domain architecture, KARI C-terminal knotted spans 183–327 (TFREETETDL…KELRQMMPWL (145 aa)). Asp-191, Glu-195, Glu-227, and Glu-231 together coordinate Mg(2+). Substrate is bound at residue Ser-252.

It belongs to the ketol-acid reductoisomerase family. The cofactor is Mg(2+).

The catalysed reaction is (2R)-2,3-dihydroxy-3-methylbutanoate + NAD(+) = (2S)-2-acetolactate + NADH + H(+). The enzyme catalyses (2R)-2,3-dihydroxy-3-methylbutanoate + NADP(+) = (2S)-2-acetolactate + NADPH + H(+). The protein operates within amino-acid biosynthesis; L-isoleucine biosynthesis; L-isoleucine from 2-oxobutanoate: step 2/4. Its pathway is amino-acid biosynthesis; L-valine biosynthesis; L-valine from pyruvate: step 2/4. Its function is as follows. Involved in the biosynthesis of branched-chain amino acids (BCAA). Catalyzes an alkyl-migration followed by a ketol-acid reduction of (S)-2-acetolactate (S2AL) to yield (R)-2,3-dihydroxy-isovalerate. In the isomerase reaction, S2AL is rearranged via a Mg-dependent methyl migration to produce 3-hydroxy-3-methyl-2-ketobutyrate (HMKB). In the reductase reaction, this 2-ketoacid undergoes a metal-dependent reduction by NADPH or NADH to yield (R)-2,3-dihydroxy-isovalerate. The sequence is that of Ketol-acid reductoisomerase (NAD(P)(+)) from Hydrogenobaculum sp. (strain Y04AAS1).